Reading from the N-terminus, the 943-residue chain is Isoleucine--tRNA ligase (943 aa).

The 'HIGH' region signature appears at 59–69; sequence PYANGQIHLGH. An L-isoleucyl-5'-AMP-binding site is contributed by glutamate 577. Residues 618-622 carry the 'KMSKS' region motif; sequence KMSKS. ATP is bound at residue lysine 621. Residues cysteine 906, cysteine 909, cysteine 926, and cysteine 929 each contribute to the Zn(2+) site.

Belongs to the class-I aminoacyl-tRNA synthetase family. IleS type 1 subfamily. As to quaternary structure, monomer. It depends on Zn(2+) as a cofactor.

The protein localises to the cytoplasm. The catalysed reaction is tRNA(Ile) + L-isoleucine + ATP = L-isoleucyl-tRNA(Ile) + AMP + diphosphate. In terms of biological role, catalyzes the attachment of isoleucine to tRNA(Ile). As IleRS can inadvertently accommodate and process structurally similar amino acids such as valine, to avoid such errors it has two additional distinct tRNA(Ile)-dependent editing activities. One activity is designated as 'pretransfer' editing and involves the hydrolysis of activated Val-AMP. The other activity is designated 'posttransfer' editing and involves deacylation of mischarged Val-tRNA(Ile). The protein is Isoleucine--tRNA ligase of Xylella fastidiosa (strain 9a5c).